The sequence spans 212 residues: uncharacterized protein (212 aa).

The region spanning 105 to 187 is the Toprim domain; sequence NTIYLVEGDF…QVKVVQLKGK (83 aa).

This is an uncharacterized protein from Mycoplasma pneumoniae (strain ATCC 29342 / M129 / Subtype 1) (Mycoplasmoides pneumoniae).